The sequence spans 409 residues: Nucleoprotein (409 aa).

5 disordered regions span residues 1–32 (MASG…SSGN), 45–69 (NSHP…QQHG), 122–145 (DVKS…LRFS), 164–194 (RSGR…GSED), and 238–259 (VDQV…DKMN). Over residues 15 to 31 (PVIKLGGPKPPKVGSSG) the composition is skewed to low complexity. An RNA-binding region spans residues 29–160 (SSGNASWFQA…GNFRWDFIPL (132 aa)). Positions 31–156 (GNASWFQAIK…GGPDGNFRWD (126 aa)) constitute a CoV N NTD domain. The span at 122–138 (DVKSRSHQGTRDPDKFD) shows a compositional bias: basic and acidic residues. Residues 164-179 (RSGRSTAASSAASSRA) are compositionally biased toward low complexity. Composition is skewed to basic and acidic residues over residues 180 to 192 (PSRD…RSGS) and 247 to 259 (KGKE…DKMN). Ser190 and Ser192 each carry phosphoserine; by host. The CoV N CTD domain maps to 219–331 (ADEMAHRRYC…QCVDGVGTRP (113 aa)). Residues 226–333 (RYCKRTIPPG…VDGVGTRPKD (108 aa)) are dimerization. A disulfide bridge connects residues Cys320 and Cys323. The segment at 326 to 409 (GVGTRPKDDE…GDSALGENEL (84 aa)) is disordered. The span at 341–357 (RSSSRPATRTSSPAPRQ) shows a compositional bias: low complexity. Positions 358–367 (QRPKKEKKPK) are enriched in basic residues. Phosphothreonine; by host is present on Thr378. At Ser379 the chain carries Phosphoserine; by host.

It belongs to the gammacoronavirus nucleocapsid protein family. Homooligomer. Both monomeric and oligomeric forms interact with RNA. Interacts with protein M. Interacts with NSP3; this interaction serves to tether the genome to the newly translated replicase-transcriptase complex at a very early stage of infection. In terms of processing, ADP-ribosylated. The ADP-ribosylation is retained in the virion during infection. Post-translationally, phosphorylated on serine and threonine residues.

Its subcellular location is the virion. The protein localises to the host endoplasmic reticulum-Golgi intermediate compartment. It localises to the host Golgi apparatus. Its function is as follows. Packages the positive strand viral genome RNA into a helical ribonucleocapsid (RNP) and plays a fundamental role during virion assembly through its interactions with the viral genome and membrane protein M. Plays an important role in enhancing the efficiency of subgenomic viral RNA transcription as well as viral replication. The polypeptide is Nucleoprotein (Avian infectious bronchitis virus (strain Arkansas 99) (IBV)).